Reading from the N-terminus, the 290-residue chain is Elongation factor Ts (290 aa).

An involved in Mg(2+) ion dislocation from EF-Tu region spans residues 81–84 (TDFV).

The protein belongs to the EF-Ts family.

It is found in the cytoplasm. In terms of biological role, associates with the EF-Tu.GDP complex and induces the exchange of GDP to GTP. It remains bound to the aminoacyl-tRNA.EF-Tu.GTP complex up to the GTP hydrolysis stage on the ribosome. In Saccharophagus degradans (strain 2-40 / ATCC 43961 / DSM 17024), this protein is Elongation factor Ts.